Reading from the N-terminus, the 302-residue chain is Phosphatidylglycerol--prolipoprotein diacylglyceryl transferase (302 aa).

The next 3 helical transmembrane spans lie at 26–46 (WYAL…VMLV), 67–87 (LVLW…VLFY), and 108–128 (IWEG…AIVL). Arg156 is a binding site for a 1,2-diacyl-sn-glycero-3-phospho-(1'-sn-glycerol). 2 helical membrane passes run 231-251 (GALV…LEGV) and 263-283 (LGLT…VWLL).

It belongs to the Lgt family.

Its subcellular location is the cell inner membrane. The enzyme catalyses L-cysteinyl-[prolipoprotein] + a 1,2-diacyl-sn-glycero-3-phospho-(1'-sn-glycerol) = an S-1,2-diacyl-sn-glyceryl-L-cysteinyl-[prolipoprotein] + sn-glycerol 1-phosphate + H(+). The protein operates within protein modification; lipoprotein biosynthesis (diacylglyceryl transfer). Its function is as follows. Catalyzes the transfer of the diacylglyceryl group from phosphatidylglycerol to the sulfhydryl group of the N-terminal cysteine of a prolipoprotein, the first step in the formation of mature lipoproteins. The protein is Phosphatidylglycerol--prolipoprotein diacylglyceryl transferase of Caulobacter sp. (strain K31).